We begin with the raw amino-acid sequence, 338 residues long: E3 ubiquitin-protein ligase SPL1 (338 aa).

The helical transmembrane segment at 1 to 21 (MIHLAGFTCCLGGVALYLLTR) threads the bilayer. At 22-223 (STGRDIKSIT…KLGDLSRRFK (202 aa)) the chain is on the chloroplast intermembrane side. A helical membrane pass occupies residues 224-246 (YASMGLTVLGVILISKPVIEYIL). The Cytoplasmic segment spans residues 247-338 (KRIEDTLERR…IQQVLKIYRH (92 aa)). The RING-type zinc-finger motif lies at 291–326 (CVVCLDQKYNTAFVECGHMCCCTPCSLQLRTCPLCR).

It localises to the plastid. The protein localises to the chloroplast outer membrane. The enzyme catalyses S-ubiquitinyl-[E2 ubiquitin-conjugating enzyme]-L-cysteine + [acceptor protein]-L-lysine = [E2 ubiquitin-conjugating enzyme]-L-cysteine + N(6)-ubiquitinyl-[acceptor protein]-L-lysine.. The protein operates within protein modification; protein ubiquitination. In terms of biological role, possesses E3 ubiquitin-protein ligase activity. The polypeptide is E3 ubiquitin-protein ligase SPL1 (Arabidopsis thaliana (Mouse-ear cress)).